A 339-amino-acid chain; its full sequence is 2-deoxy-scyllo-inosamine dehydrogenase (339 aa).

Cys37, His59, Cys88, Cys91, Cys94, Cys102, and Glu143 together coordinate Zn(2+).

The protein belongs to the zinc-containing alcohol dehydrogenase family. DOIA dehydrogenase subfamily. The cofactor is Zn(2+).

The catalysed reaction is 2-deoxy-scyllo-inosamine + NADP(+) = 3-amino-2,3-dideoxy-scyllo-inosose + NADPH + H(+). It catalyses the reaction 2-deoxy-scyllo-inosamine + NAD(+) = 3-amino-2,3-dideoxy-scyllo-inosose + NADH + H(+). It participates in metabolic intermediate biosynthesis; 2-deoxystreptamine biosynthesis; 2-deoxystreptamine from D-glucose 6-phosphate: step 3/4. It functions in the pathway antibiotic biosynthesis; paromomycin biosynthesis. Its function is as follows. Catalyzes the oxidation of 2-deoxy-scyllo-inosamine (DOIA) with NAD(+) or NADP(+), forming 3-amino-2,3-dideoxy-scyllo-inosose (amino-DOI). This chain is 2-deoxy-scyllo-inosamine dehydrogenase (parE), found in Streptomyces paromomycinus (Streptomyces rimosus subsp. paromomycinus).